Reading from the N-terminus, the 570-residue chain is Urease subunit alpha 1 (570 aa).

In terms of domain architecture, Urease spans G131–F570. Residues H136, H138, and K219 each coordinate Ni(2+). K219 bears the N6-carboxylysine mark. Position 221 (H221) interacts with substrate. The Ni(2+) site is built by H248 and H274. H322 (proton donor) is an active-site residue. A Ni(2+)-binding site is contributed by D362.

It belongs to the metallo-dependent hydrolases superfamily. Urease alpha subunit family. In terms of assembly, heterotrimer of UreA (gamma), UreB (beta) and UreC (alpha) subunits. Three heterotrimers associate to form the active enzyme. Ni cation is required as a cofactor. Post-translationally, carboxylation allows a single lysine to coordinate two nickel ions.

The protein localises to the cytoplasm. The enzyme catalyses urea + 2 H2O + H(+) = hydrogencarbonate + 2 NH4(+). It functions in the pathway nitrogen metabolism; urea degradation; CO(2) and NH(3) from urea (urease route): step 1/1. In terms of biological role, may protect brucellae during their passage through the stomach. The major route of infection in human brucellosis is oral. The chain is Urease subunit alpha 1 from Brucella abortus (strain 2308).